Reading from the N-terminus, the 374-residue chain is MSVALFCGPPPAVSFGCKDGRGRKGMVRSKDIVRQTVKPPAHACRLIGWNKYPGSVVPTNSSLSPSPTALDDEIELDLSPFLIIYKDGRIERLKGTTVIPACPEVATKDVIIDPATGVSVRLYLPNVVDLPSKKLPVLVYFHGGGFVIENTGSPNYHNYLTLLAAKSGLLIVSVNYRLAPEHPIPASFDDCMAGFNWVVSHSAGPAPEPWLARHGDLTQILISGDSAGGTVTHYVLLRADAGVIEGAALVHPYFLGSKRLENQTEEDFEFHEKLWRLSTPDTEGLDDPLINPLAPGAPSLAGLKCKRAVVFVAELDFLVERGRMYYDALVKSGWGGEAELVHQKGVGHVFHLSDYSGDVSVDMMAKMVAFLRGE.

Residues 1–68 (MSVALFCGPP…TNSSLSPSPT (68 aa)) constitute an amyloplast transit peptide. S226 functions as the Acyl-ester intermediate in the catalytic mechanism. Residues D316 and H348 each act as charge relay system in the active site.

The protein belongs to the AB hydrolase superfamily. In terms of assembly, homodimer. In terms of tissue distribution, highly expressed in pistil and bulb scales. Lower expression in stem, and barely detected in root, leaf, petal and stamen.

It is found in the plastid. It localises to the amyloplast. It carries out the reaction 6-tuliposide A = tulipalin A + D-glucose. In terms of biological role, lactone-forming carboxylesterases, specifically catalyzing intramolecular transesterification, but not hydrolysis. Involved in the biosynthesis of tulipalins, defensive chemicals that show antimicrobial activities against a broad range of strains of bacteria and fungi. Substrates are 6-tuliposide A &gt; 6-tuliposide B. The chain is Tuliposide A-converting enzyme b2, amyloplastic (TCEA-B2) from Tulipa gesneriana (Garden tulip).